Here is a 1389-residue protein sequence, read N- to C-terminus: DNA-directed RNA polymerase subunit beta'' (1389 aa).

Positions 224, 295, 302, and 305 each coordinate Zn(2+).

Belongs to the RNA polymerase beta' chain family. RpoC2 subfamily. In terms of assembly, in plastids the minimal PEP RNA polymerase catalytic core is composed of four subunits: alpha, beta, beta', and beta''. When a (nuclear-encoded) sigma factor is associated with the core the holoenzyme is formed, which can initiate transcription. Zn(2+) serves as cofactor.

Its subcellular location is the plastid. The protein resides in the chloroplast. It carries out the reaction RNA(n) + a ribonucleoside 5'-triphosphate = RNA(n+1) + diphosphate. DNA-dependent RNA polymerase catalyzes the transcription of DNA into RNA using the four ribonucleoside triphosphates as substrates. The polypeptide is DNA-directed RNA polymerase subunit beta'' (Atropa belladonna (Belladonna)).